Consider the following 108-residue polypeptide: Small ribosomal subunit protein eS25B (108 aa).

The span at 1-20 (MPPKQQLSKAAKAAAALAGG) shows a compositional bias: low complexity. The tract at residues 1-30 (MPPKQQLSKAAKAAAALAGGKKSKKKWSKK) is disordered. P2 is modified (n,N-dimethylproline; by NTM1). Basic residues predominate over residues 21–30 (KKSKKKWSKK).

It belongs to the eukaryotic ribosomal protein eS25 family. As to quaternary structure, component of the small ribosomal subunit (SSU). Mature yeast ribosomes consist of a small (40S) and a large (60S) subunit. The 40S small subunit contains 1 molecule of ribosomal RNA (18S rRNA) and 33 different proteins (encoded by 57 genes). The large 60S subunit contains 3 rRNA molecules (25S, 5.8S and 5S rRNA) and 46 different proteins (encoded by 81 genes).

It localises to the cytoplasm. Functionally, component of the ribosome, a large ribonucleoprotein complex responsible for the synthesis of proteins in the cell. The small ribosomal subunit (SSU) binds messenger RNAs (mRNAs) and translates the encoded message by selecting cognate aminoacyl-transfer RNA (tRNA) molecules. The large subunit (LSU) contains the ribosomal catalytic site termed the peptidyl transferase center (PTC), which catalyzes the formation of peptide bonds, thereby polymerizing the amino acids delivered by tRNAs into a polypeptide chain. The nascent polypeptides leave the ribosome through a tunnel in the LSU and interact with protein factors that function in enzymatic processing, targeting, and the membrane insertion of nascent chains at the exit of the ribosomal tunnel. This is Small ribosomal subunit protein eS25B from Saccharomyces cerevisiae (strain ATCC 204508 / S288c) (Baker's yeast).